The sequence spans 165 residues: Chorismate pyruvate-lyase (165 aa).

Substrate-binding residues include Met35, Arg77, Leu115, and Glu156.

Belongs to the UbiC family. As to quaternary structure, monomer.

The protein localises to the cytoplasm. The catalysed reaction is chorismate = 4-hydroxybenzoate + pyruvate. It functions in the pathway cofactor biosynthesis; ubiquinone biosynthesis. In terms of biological role, removes the pyruvyl group from chorismate, with concomitant aromatization of the ring, to provide 4-hydroxybenzoate (4HB) for the ubiquinone pathway. The sequence is that of Chorismate pyruvate-lyase from Escherichia coli (strain K12 / MC4100 / BW2952).